The following is a 249-amino-acid chain: Coproheme decarboxylase (249 aa).

Fe-coproporphyrin III is bound by residues Arg131, 145-149 (YPMNK), His172, and Gln185. Residue Tyr145 is part of the active site.

Belongs to the ChdC family. Type 1 subfamily. Fe-coproporphyrin III is required as a cofactor.

It carries out the reaction Fe-coproporphyrin III + 2 H2O2 + 2 H(+) = heme b + 2 CO2 + 4 H2O. It catalyses the reaction Fe-coproporphyrin III + H2O2 + H(+) = harderoheme III + CO2 + 2 H2O. The enzyme catalyses harderoheme III + H2O2 + H(+) = heme b + CO2 + 2 H2O. It functions in the pathway porphyrin-containing compound metabolism; protoheme biosynthesis. In terms of biological role, involved in coproporphyrin-dependent heme b biosynthesis. Catalyzes the decarboxylation of Fe-coproporphyrin III (coproheme) to heme b (protoheme IX), the last step of the pathway. The reaction occurs in a stepwise manner with a three-propionate intermediate. This Staphylococcus carnosus (strain TM300) protein is Coproheme decarboxylase.